A 238-amino-acid polypeptide reads, in one-letter code: Urease accessory protein UreF (238 aa).

The protein belongs to the UreF family. As to quaternary structure, ureD, UreF and UreG form a complex that acts as a GTP-hydrolysis-dependent molecular chaperone, activating the urease apoprotein by helping to assemble the nickel containing metallocenter of UreC. The UreE protein probably delivers the nickel.

It localises to the cytoplasm. Required for maturation of urease via the functional incorporation of the urease nickel metallocenter. The protein is Urease accessory protein UreF of Rhodopseudomonas palustris (strain BisA53).